The chain runs to 216 residues: Somatotropin (216 aa).

An N-terminal signal peptide occupies residues 1–26 (MAAGPRTSVLLAFTLLCLPWPQEAGA). Zn(2+) is bound at residue histidine 45. A disulfide bond links cysteine 78 and cysteine 189. At serine 131 the chain carries Phosphoserine. Position 198 (glutamate 198) interacts with Zn(2+). A disulfide bridge links cysteine 206 with cysteine 214.

This sequence belongs to the somatotropin/prolactin family.

The protein resides in the secreted. In terms of biological role, plays an important role in growth control. Its major role in stimulating body growth is to stimulate the liver and other tissues to secrete IGF1. It stimulates both the differentiation and proliferation of myoblasts. It also stimulates amino acid uptake and protein synthesis in muscle and other tissues. The chain is Somatotropin (GH1) from Camelus dromedarius (Dromedary).